The primary structure comprises 131 residues: Fluoride-specific ion channel FluC 2 (131 aa).

4 helical membrane passes run 5 to 25 (FGVAVGGALGALARYGVSLLV), 39 to 59 (LATLLVNVLGSFLLAFITTLA), 70 to 90 (LAVGTGFIGALTTFSTFAWES), and 104 to 124 (LYVLGNLVLGYAAVLLGRALA). Positions 78 and 81 each coordinate Na(+).

This sequence belongs to the fluoride channel Fluc/FEX (TC 1.A.43) family.

The protein localises to the cell membrane. The enzyme catalyses fluoride(in) = fluoride(out). Its activity is regulated as follows. Na(+) is not transported, but it plays an essential structural role and its presence is essential for fluoride channel function. In terms of biological role, fluoride-specific ion channel. Important for reducing fluoride concentration in the cell, thus reducing its toxicity. This chain is Fluoride-specific ion channel FluC 2, found in Deinococcus geothermalis (strain DSM 11300 / CIP 105573 / AG-3a).